The primary structure comprises 385 residues: Deoxyguanosinetriphosphate triphosphohydrolase-like protein (385 aa).

Positions 1 to 14 (MTEGVEGRSQERSD) are enriched in basic and acidic residues. Residues 1–23 (MTEGVEGRSQERSDLAGFAARSA) are disordered. One can recognise an HD domain in the interval 75–204 (RLTHSLEVAQ…INYADEIAYN (130 aa)).

The protein belongs to the dGTPase family. Type 2 subfamily.

The polypeptide is Deoxyguanosinetriphosphate triphosphohydrolase-like protein (Geobacter metallireducens (strain ATCC 53774 / DSM 7210 / GS-15)).